The chain runs to 351 residues: MVPMDRLLQIVRRFEFLEARLSAGAAPAEIAALSREYAELKPVVVEISAYRTALEDLAEAEAMLSDPEMRALAEDEIPALRARIPGMEQALRLALLPKDAADARPAILEIRPGTGGEEAALFAGDLLRMYQRYAEGQGWRFELLDLAPSELGGIREATARVEGEGAFARLKYESGVHRVQRVPETEAQGRIHTSAATVAVLPEAEEVDLEIPAADIRIDTMRSSGAGGQHVNTTDSAVRITHLPTGIIVTSSEKSQHRNREIAMQVLRARLYDLERQRLADARSADRKAQVGSGDRSERIRTYNFPQGRMTDHRINLTLYALPQIMAGDLSEVISALTAHDQAARLAEMEA.

N5-methylglutamine is present on Gln229.

It belongs to the prokaryotic/mitochondrial release factor family. Post-translationally, methylated by PrmC. Methylation increases the termination efficiency of RF1.

It is found in the cytoplasm. Its function is as follows. Peptide chain release factor 1 directs the termination of translation in response to the peptide chain termination codons UAG and UAA. The sequence is that of Peptide chain release factor 1 from Cereibacter sphaeroides (strain ATCC 17023 / DSM 158 / JCM 6121 / CCUG 31486 / LMG 2827 / NBRC 12203 / NCIMB 8253 / ATH 2.4.1.) (Rhodobacter sphaeroides).